Consider the following 422-residue polypeptide: Putative serpin-Z8 (422 aa).

An RCL region spans residues 369–393; sequence GTVAAAATMTRMLPSGVPPPPVDFV.

This sequence belongs to the serpin family.

In terms of biological role, probable serine protease inhibitor. The polypeptide is Putative serpin-Z8 (Oryza sativa subsp. japonica (Rice)).